Consider the following 427-residue polypeptide: CCA-adding enzyme (427 aa).

2 residues coordinate ATP: serine 50 and lysine 53. Residues serine 50 and lysine 53 each coordinate CTP. Residues aspartate 61, aspartate 63, and aspartate 112 each contribute to the Mg(2+) site. ATP-binding residues include histidine 135, lysine 155, and tyrosine 164. Positions 135, 155, and 164 each coordinate CTP.

The protein belongs to the tRNA nucleotidyltransferase/poly(A) polymerase family. Archaeal CCA-adding enzyme subfamily. In terms of assembly, homodimer. Requires Mg(2+) as cofactor.

The enzyme catalyses a tRNA precursor + 2 CTP + ATP = a tRNA with a 3' CCA end + 3 diphosphate. It catalyses the reaction a tRNA with a 3' CCA end + 2 CTP + ATP = a tRNA with a 3' CCACCA end + 3 diphosphate. Its function is as follows. Catalyzes the addition and repair of the essential 3'-terminal CCA sequence in tRNAs without using a nucleic acid template. Adds these three nucleotides in the order of C, C, and A to the tRNA nucleotide-73, using CTP and ATP as substrates and producing inorganic pyrophosphate. tRNA 3'-terminal CCA addition is required both for tRNA processing and repair. Also involved in tRNA surveillance by mediating tandem CCA addition to generate a CCACCA at the 3' terminus of unstable tRNAs. While stable tRNAs receive only 3'-terminal CCA, unstable tRNAs are marked with CCACCA and rapidly degraded. This is CCA-adding enzyme from Picrophilus torridus (strain ATCC 700027 / DSM 9790 / JCM 10055 / NBRC 100828 / KAW 2/3).